Reading from the N-terminus, the 545-residue chain is Leucine-rich repeat LGI family member 2 (545 aa).

The signal sequence occupies residues 1–28 (MALRRGGCGALGLLLLLLGAACLIPRSA). An LRRNT domain is found at 29-65 (QVRRLARCPATCSCTKESIICVGSSWVPRIVPGDISS). Residue Asn-70 is glycosylated (N-linked (GlcNAc...) asparagine). LRR repeat units lie at residues 86 to 107 (SLQL…AFAG), 110 to 131 (HLEY…AFRG), and 134 to 155 (DLTH…VFSD). The LRRCT domain occupies 167–217 (NKFECDCKAKWLYLWLKMTNSTVSDVLCIGPPEYQEKKLNDVTSFDYECTT). An N-linked (GlcNAc...) asparagine glycan is attached at Asn-186. 7 EAR repeats span residues 219–261 (DFVV…EWDH), 265–307 (NFRS…KYDE), 311–358 (KFVK…KWNS), 360–403 (GFYS…QWNK), 407–450 (KFVP…RWNS), 452–494 (QFVE…QWDK), and 498–540 (LFKK…EHII). Residue Asn-271 is glycosylated (N-linked (GlcNAc...) asparagine). The N-linked (GlcNAc...) asparagine glycan is linked to Asn-402.

As to expression, brain, heart and placenta.

The protein localises to the secreted. Functionally, required for the development of soma-targeting inhibitory GABAergic synapses made by parvalbumin-positive basket cells. The sequence is that of Leucine-rich repeat LGI family member 2 (LGI2) from Homo sapiens (Human).